Consider the following 201-residue polypeptide: MKVVAFERQEQGTGASRRLRNAGKTTGIVYGGEAAPQKIELDHNALWHALKKEAFHSSILDLEVAGQSQQVLLRDVQYHPFKQLVLHVDFQRVDAKKKLHTKAPLHFLNAEISPAVKLSSAIVSHVATEIEIECLPADLPEFLEVDLSKIEAGQSLHAKDITLPKGVVLVAHVDAENPVVASATVPAGAVSDAAEGETPAA.

It belongs to the bacterial ribosomal protein bL25 family. CTC subfamily. In terms of assembly, part of the 50S ribosomal subunit; part of the 5S rRNA/L5/L18/L25 subcomplex. Contacts the 5S rRNA. Binds to the 5S rRNA independently of L5 and L18.

In terms of biological role, this is one of the proteins that binds to the 5S RNA in the ribosome where it forms part of the central protuberance. This Burkholderia lata (strain ATCC 17760 / DSM 23089 / LMG 22485 / NCIMB 9086 / R18194 / 383) protein is Large ribosomal subunit protein bL25.